Reading from the N-terminus, the 439-residue chain is tRNA-2-methylthio-N(6)-dimethylallyladenosine synthase (439 aa).

Residues 2 to 119 (KYIYIKTWGC…LPKMIDEVEK (118 aa)) enclose the MTTase N-terminal domain. Residues Cys-11, Cys-48, Cys-82, Cys-156, Cys-160, and Cys-163 each contribute to the [4Fe-4S] cluster site. One can recognise a Radical SAM core domain in the interval 142–374 (KKKGYTADIS…QERINIQTML (233 aa)). The 63-residue stretch at 377–439 (RKMFGSIQSV…HTHSLKGELF (63 aa)) folds into the TRAM domain.

The protein belongs to the methylthiotransferase family. MiaB subfamily. In terms of assembly, monomer. [4Fe-4S] cluster is required as a cofactor.

The protein localises to the cytoplasm. It carries out the reaction N(6)-dimethylallyladenosine(37) in tRNA + (sulfur carrier)-SH + AH2 + 2 S-adenosyl-L-methionine = 2-methylsulfanyl-N(6)-dimethylallyladenosine(37) in tRNA + (sulfur carrier)-H + 5'-deoxyadenosine + L-methionine + A + S-adenosyl-L-homocysteine + 2 H(+). In terms of biological role, catalyzes the methylthiolation of N6-(dimethylallyl)adenosine (i(6)A), leading to the formation of 2-methylthio-N6-(dimethylallyl)adenosine (ms(2)i(6)A) at position 37 in tRNAs that read codons beginning with uridine. This Buchnera aphidicola subsp. Acyrthosiphon pisum (strain APS) (Acyrthosiphon pisum symbiotic bacterium) protein is tRNA-2-methylthio-N(6)-dimethylallyladenosine synthase.